A 108-amino-acid polypeptide reads, in one-letter code: Transcriptional activator HlyU (108 aa).

The 95-residue stretch at 13-107 folds into the HTH arsR-type domain; the sequence is EMEKNSAKAV…LLHRLYCQAN (95 aa). A DNA-binding region (H-T-H motif) is located at residues 47–66; that stretch reads VGELSSRLELSQSALSQHLA.

Its function is as follows. Up-regulates the expression of the hemolysin gene, hlyA, and may promote expression of other virulence determinants in vivo. It may have both positive and negative regulator activities. This is Transcriptional activator HlyU (hlyU) from Vibrio cholerae serotype O1 (strain ATCC 39315 / El Tor Inaba N16961).